Consider the following 533-residue polypeptide: ATP synthase F(1) complex catalytic subunit beta, mitochondrial (533 aa).

The N-terminal 53 residues, 1–53, are a transit peptide targeting the mitochondrion; it reads MLGLAGRCSAAAASAARPALRRAAGPSHGFLPLLLSRGAGPAAAVGARRDHAA. Residues Gly-214, Val-215, Gly-216, Lys-217, Thr-218, and Val-219 each coordinate ADP. Gly-214 lines the ATP pocket. Phosphate is bound by residues Gly-214, Val-215, Gly-216, Lys-217, and Thr-218. Residues Gly-216, Lys-217, Thr-218, and Val-219 each contribute to the ATP site. Thr-218 is a binding site for Mg(2+). Glu-243 provides a ligand contact to Mg(2+). Arg-244 is an ATP binding site.

In terms of assembly, homotrimer. Component of the ATP synthase complex composed at least of ATP5F1A/subunit alpha, ATP5F1B/subunit beta, ATP5MC1/subunit c (homooctomer), MT-ATP6/subunit a, MT-ATP8/subunit 8, ATP5ME/subunit e, ATP5MF/subunit f, ATP5MG/subunit g, ATP5MK/subunit k, ATP5MJ/subunit j, ATP5F1C/subunit gamma, ATP5F1D/subunit delta, ATP5F1E/subunit epsilon, ATP5PF/subunit F6, ATP5PB/subunit b, ATP5PD/subunit d, ATP5PO/subunit OSCP. ATP synthase complex consists of a soluble F(1) head domain (subunits alpha(3) and beta(3)) - the catalytic core - and a membrane F(0) domain - the membrane proton channel (subunits c, a, 8, e, f, g, k and j). These two domains are linked by a central stalk (subunits gamma, delta, and epsilon) rotating inside the F1 region and a stationary peripheral stalk (subunits F6, b, d, and OSCP).

Its subcellular location is the mitochondrion inner membrane. It carries out the reaction ATP + H2O + 4 H(+)(in) = ADP + phosphate + 5 H(+)(out). In terms of biological role, catalytic subunit beta, of the mitochondrial membrane ATP synthase complex (F(1)F(0) ATP synthase or Complex V) that produces ATP from ADP in the presence of a proton gradient across the membrane which is generated by electron transport complexes of the respiratory chain. ATP synthase complex consist of a soluble F(1) head domain - the catalytic core - and a membrane F(1) domain - the membrane proton channel. These two domains are linked by a central stalk rotating inside the F(1) region and a stationary peripheral stalk. During catalysis, ATP synthesis in the catalytic domain of F(1) is coupled via a rotary mechanism of the central stalk subunits to proton translocation. In vivo, can only synthesize ATP although its ATP hydrolase activity can be activated artificially in vitro. With the subunit alpha (ATP5F1A), forms the catalytic core in the F(1) domain. The sequence is that of ATP synthase F(1) complex catalytic subunit beta, mitochondrial from Gallus gallus (Chicken).